The chain runs to 200 residues: 3-isopropylmalate dehydratase small subunit (200 aa).

The protein belongs to the LeuD family. LeuD type 1 subfamily. Heterodimer of LeuC and LeuD.

It catalyses the reaction (2R,3S)-3-isopropylmalate = (2S)-2-isopropylmalate. Its pathway is amino-acid biosynthesis; L-leucine biosynthesis; L-leucine from 3-methyl-2-oxobutanoate: step 2/4. In terms of biological role, catalyzes the isomerization between 2-isopropylmalate and 3-isopropylmalate, via the formation of 2-isopropylmaleate. The protein is 3-isopropylmalate dehydratase small subunit of Actinobacillus succinogenes (strain ATCC 55618 / DSM 22257 / CCUG 43843 / 130Z).